A 937-amino-acid chain; its full sequence is Translation initiation factor IF-2 (937 aa).

Disordered regions lie at residues 61–156 and 171–274; these read IQAN…KAKQ and LTQS…SHKI. Residues 179 to 196 show a composition bias toward basic and acidic residues; sequence AKKEISEVKKQEQEIKRH. A compositionally biased stretch (basic residues) spans 197-208; sequence ENIKRRTGFRVI. The segment covering 237 to 252 has biased composition (basic and acidic residues); it reads EDIKKEWQEKDKQEAK. The tr-type G domain maps to 436–605; it reads ERPPVVTIMG…LIQADIMELK (170 aa). Positions 445 to 452 are G1; that stretch reads GHVDHGKT. 445–452 lines the GTP pocket; sequence GHVDHGKT. The G2 stretch occupies residues 470-474; sequence GITQH. Positions 491-494 are G3; that stretch reads DTPG. Residues 491–495 and 545–548 contribute to the GTP site; these read DTPGH and NKMD. A G4 region spans residues 545–548; it reads NKMD. The segment at 581 to 583 is G5; the sequence is SAK.

It belongs to the TRAFAC class translation factor GTPase superfamily. Classic translation factor GTPase family. IF-2 subfamily.

It localises to the cytoplasm. Functionally, one of the essential components for the initiation of protein synthesis. Protects formylmethionyl-tRNA from spontaneous hydrolysis and promotes its binding to the 30S ribosomal subunits. Also involved in the hydrolysis of GTP during the formation of the 70S ribosomal complex. This chain is Translation initiation factor IF-2, found in Helicobacter pylori (strain G27).